A 219-amino-acid polypeptide reads, in one-letter code: Segregation and condensation protein B (219 aa).

The tract at residues 193–219 is disordered; the sequence is SLFAGGEEPSAEAADGGAGESTHGEEE. Over residues 196–207 the composition is skewed to low complexity; that stretch reads AGGEEPSAEAAD.

The protein belongs to the ScpB family. As to quaternary structure, homodimer. Homodimerization may be required to stabilize the binding of ScpA to the Smc head domains. Component of a cohesin-like complex composed of ScpA, ScpB and the Smc homodimer, in which ScpA and ScpB bind to the head domain of Smc. The presence of the three proteins is required for the association of the complex with DNA.

It is found in the cytoplasm. In terms of biological role, participates in chromosomal partition during cell division. May act via the formation of a condensin-like complex containing Smc and ScpA that pull DNA away from mid-cell into both cell halves. The sequence is that of Segregation and condensation protein B from Symbiobacterium thermophilum (strain DSM 24528 / JCM 14929 / IAM 14863 / T).